An 873-amino-acid chain; its full sequence is Alanine--tRNA ligase (873 aa).

Zn(2+)-binding residues include His-563, His-567, Cys-664, and His-668.

Belongs to the class-II aminoacyl-tRNA synthetase family. The cofactor is Zn(2+).

The protein resides in the cytoplasm. It carries out the reaction tRNA(Ala) + L-alanine + ATP = L-alanyl-tRNA(Ala) + AMP + diphosphate. In terms of biological role, catalyzes the attachment of alanine to tRNA(Ala) in a two-step reaction: alanine is first activated by ATP to form Ala-AMP and then transferred to the acceptor end of tRNA(Ala). Also edits incorrectly charged Ser-tRNA(Ala) and Gly-tRNA(Ala) via its editing domain. The sequence is that of Alanine--tRNA ligase from Aromatoleum aromaticum (strain DSM 19018 / LMG 30748 / EbN1) (Azoarcus sp. (strain EbN1)).